The sequence spans 500 residues: Cytochrome P450 71D7 (500 aa).

C441 serves as a coordination point for heme.

The protein belongs to the cytochrome P450 family. Heme serves as cofactor.

This is Cytochrome P450 71D7 (CYP71D7) from Solanum chacoense (Chaco potato).